The primary structure comprises 327 residues: MPDREIKSPIWHPEPGTVEDVFDHTYKEKEGPKPPTVIVWRNVILMSLLHLGALYGLFLFPSARALTWIWFFGCLLFSALGITAGAHRLWSHRSYKASLPLQIFLALGNSMAFQNDIYEWSRDHRVHHKYSETDADPHNAVRGFFFSHVGWLLVRKHPDVIEKGRKLELSDLKADKVVMFQRRFYKPSVLLMCFFVPTFVPWYVWGESLWVAYFVPALLRYALVLNATWLVNSAAHMWGNRPYDSSINPRENRFVTFSAIGEGFHNYHHTFPFDYATSEFGCKLNLTTCCFIDLMCFLGLAREPKRVSREAVLARAQRTGDGSHWSG.

The Cytoplasmic segment spans residues 1-39 (MPDREIKSPIWHPEPGTVEDVFDHTYKEKEGPKPPTVIV). Residues 40-60 (WRNVILMSLLHLGALYGLFLF) form a helical membrane-spanning segment. Position 42 (asparagine 42) interacts with substrate. Residues 61-64 (PSAR) lie on the Lumenal side of the membrane. A helical membrane pass occupies residues 65 to 85 (ALTWIWFFGCLLFSALGITAG). Over 86–184 (AHRLWSHRSY…DKVVMFQRRF (99 aa)) the chain is Cytoplasmic. Histidine 87 and histidine 92 together coordinate Fe cation. Positions 87–92 (HRLWSH) match the Histidine box-1 motif. Asparagine 115, arginine 122, and aspartate 123 together coordinate substrate. Fe cation is bound by residues histidine 124, histidine 127, and histidine 128. A Histidine box-2 motif is present at residues 124–128 (HRVHH). 2 residues coordinate substrate: arginine 155 and lysine 156. The helical transmembrane segment at 185–204 (YKPSVLLMCFFVPTFVPWYV) threads the bilayer. The Lumenal segment spans residues 205–208 (WGES). Residues 209 to 230 (LWVAYFVPALLRYALVLNATWL) form a helical membrane-spanning segment. Residue tryptophan 229 participates in substrate binding. Residues 231–327 (VNSAAHMWGN…RTGDGSHWSG (97 aa)) are Cytoplasmic-facing. Fe cation-binding residues include histidine 236, histidine 265, histidine 268, and histidine 269. Residues 265–269 (HNYHH) carry the Histidine box-3 motif.

The protein belongs to the fatty acid desaturase type 1 family. Fe(2+) serves as cofactor.

It is found in the endoplasmic reticulum membrane. The enzyme catalyses octadecanoyl-CoA + 2 Fe(II)-[cytochrome b5] + O2 + 2 H(+) = (9Z)-octadecenoyl-CoA + 2 Fe(III)-[cytochrome b5] + 2 H2O. Functionally, stearoyl-CoA desaturase that utilizes O(2) and electrons from reduced cytochrome b5 to introduce the first double bond into saturated fatty acyl-CoA substrates. Has high specificity and catalyzes the insertion of a cis double bond at the delta-9 position into fatty acyl-CoA substrates including palmitoyl-CoA and stearoyl-CoA. Contributes to the biosynthesis of membrane phospholipids, cholesterol esters and triglycerides. This Cyprinus carpio (Common carp) protein is Acyl-CoA desaturase.